Reading from the N-terminus, the 139-residue chain is UDP-glucose 4-epimerase (139 aa).

Residues 11–12, 31–36, 58–59, 80–84, Asn99, and Ser124 each bind NAD(+); these read YI, DNLCNS, DI, and FAGLK. Residue Ser124 coordinates substrate. Residue Tyr136 is the Proton acceptor of the active site.

It belongs to the NAD(P)-dependent epimerase/dehydratase family. As to quaternary structure, homodimer. NAD(+) serves as cofactor.

It catalyses the reaction UDP-alpha-D-glucose = UDP-alpha-D-galactose. It functions in the pathway carbohydrate metabolism; galactose metabolism. Its function is as follows. Involved in the metabolism of galactose. Catalyzes the conversion of UDP-galactose (UDP-Gal) to UDP-glucose (UDP-Glc) through a mechanism involving the transient reduction of NAD. In Klebsiella pneumoniae, this protein is UDP-glucose 4-epimerase (galE).